The following is a 426-amino-acid chain: MTISQDLFARAQASIPGGVNSPVRAFNGVGGTPLFITKAEGAFTFDADGNRYIDYVGSWGPMIMGHNHPAIKQAVHDAVENGLSYGAPTEAEILMAEKVKELVPSIEKVRMVSSGTEATMSAIRLARGFTGRDKILKFEGCYHGHADSLLVKAGSGALTMGVPNSPGIPEDFAKHTLTVSFNNLDEVKAIFAKYADEIACIIVEPVAGNMNCIPPVPGFLEGLRDVCDEYKSVLIFDEVMTGFRVALGGAQAYYNIKPDLTCLGKVIGGGMPVGAFGGKTEIMDYIAPVGPVYQAGTLSGNPIAMAAGLKSLELLSEPGLHAKLEATSKAICEGFEAGAKKAGIALTTNYAGGMYGFFFTDAEKVTTYKQATECDLERFKRFFHLMLEEGVYLAPSAFEAGFVCAAHNEQEIKDTIAAAERAFAKL.

Lys265 is subject to N6-(pyridoxal phosphate)lysine.

The protein belongs to the class-III pyridoxal-phosphate-dependent aminotransferase family. HemL subfamily. Homodimer. Pyridoxal 5'-phosphate is required as a cofactor.

It is found in the cytoplasm. It carries out the reaction (S)-4-amino-5-oxopentanoate = 5-aminolevulinate. It participates in porphyrin-containing compound metabolism; protoporphyrin-IX biosynthesis; 5-aminolevulinate from L-glutamyl-tRNA(Glu): step 2/2. This Pseudoalteromonas translucida (strain TAC 125) protein is Glutamate-1-semialdehyde 2,1-aminomutase.